The following is a 132-amino-acid chain: uncharacterized protein (132 aa).

This is an uncharacterized protein from Caenorhabditis elegans.